The chain runs to 1499 residues: DNA-directed RNA polymerase subunit beta' (1499 aa).

Residues C67, C69, C82, and C85 each coordinate Zn(2+). The Mg(2+) site is built by D497, D499, and D501. Residues C865, C940, C947, and C950 each coordinate Zn(2+). A disordered region spans residues 1475-1499 (YEPSQRAYQEDEYAKKEDGEIAIDD). Residues 1482-1493 (YQEDEYAKKEDG) show a composition bias toward basic and acidic residues.

Belongs to the RNA polymerase beta' chain family. As to quaternary structure, the RNAP catalytic core consists of 2 alpha, 1 beta, 1 beta' and 1 omega subunit. When a sigma factor is associated with the core the holoenzyme is formed, which can initiate transcription. It depends on Mg(2+) as a cofactor. Requires Zn(2+) as cofactor.

The catalysed reaction is RNA(n) + a ribonucleoside 5'-triphosphate = RNA(n+1) + diphosphate. In terms of biological role, DNA-dependent RNA polymerase catalyzes the transcription of DNA into RNA using the four ribonucleoside triphosphates as substrates. The protein is DNA-directed RNA polymerase subunit beta' of Chloroherpeton thalassium (strain ATCC 35110 / GB-78).